The chain runs to 194 residues: Fe/S biogenesis protein NfuA (194 aa).

Residues Cys-152 and Cys-155 each contribute to the [4Fe-4S] cluster site.

It belongs to the NfuA family. Homodimer. [4Fe-4S] cluster is required as a cofactor.

Functionally, involved in iron-sulfur cluster biogenesis. Binds a 4Fe-4S cluster, can transfer this cluster to apoproteins, and thereby intervenes in the maturation of Fe/S proteins. Could also act as a scaffold/chaperone for damaged Fe/S proteins. This Pseudomonas entomophila (strain L48) protein is Fe/S biogenesis protein NfuA.